The sequence spans 225 residues: PKHD-type hydroxylase YbiX (225 aa).

Residues 78–177 (TLSTPLFNRY…RVASFMWIQS (100 aa)) form the Fe2OG dioxygenase domain. Fe cation-binding residues include His-96, Asp-98, and His-158. Arg-168 contacts 2-oxoglutarate.

Fe(2+) is required as a cofactor. Requires L-ascorbate as cofactor.

This is PKHD-type hydroxylase YbiX from Escherichia coli O81 (strain ED1a).